The following is a 436-amino-acid chain: ATP-dependent RNA helicase RhlB (436 aa).

The Q motif signature appears at 9–37 (QKFADFPLHKEVHQALNEAGFEFCTPIQA). The region spanning 40–219 (LPILLEKKDI…YDHMNEPEKV (180 aa)) is the Helicase ATP-binding domain. 53 to 60 (AQTGTGKT) contacts ATP. The short motif at 165-168 (DEAD) is the DEAD box element. Residues 243-390 (KMPLLLSLLE…VTSYDSDALL (148 aa)) form the Helicase C-terminal domain. The disordered stretch occupies residues 392–436 (DIPPPVRIHRKPSTHTRNTRDRGASRPQGGQRSGPRRHDRTRRHS). Positions 425–436 (GPRRHDRTRRHS) are enriched in basic residues.

This sequence belongs to the DEAD box helicase family. RhlB subfamily. In terms of assembly, component of the RNA degradosome, which is a multiprotein complex involved in RNA processing and mRNA degradation.

The protein resides in the cytoplasm. The catalysed reaction is ATP + H2O = ADP + phosphate + H(+). Its function is as follows. DEAD-box RNA helicase involved in RNA degradation. Has RNA-dependent ATPase activity and unwinds double-stranded RNA. This chain is ATP-dependent RNA helicase RhlB, found in Shewanella halifaxensis (strain HAW-EB4).